The following is a 201-amino-acid chain: Recombination protein RecR (201 aa).

Residues 60 to 75 (CQICGNIDTRDPCTIC) form a C4-type zinc finger. Residues 83–178 (TLLVVVETVA…KITRLAHGVP (96 aa)) enclose the Toprim domain.

This sequence belongs to the RecR family.

May play a role in DNA repair. It seems to be involved in an RecBC-independent recombinational process of DNA repair. It may act with RecF and RecO. The chain is Recombination protein RecR from Beijerinckia indica subsp. indica (strain ATCC 9039 / DSM 1715 / NCIMB 8712).